Here is a 350-residue protein sequence, read N- to C-terminus: GTPase Obg (350 aa).

The 159-residue stretch at 1–159 (MRFIDQTEIF…FRLHLELKLL (159 aa)) folds into the Obg domain. In terms of domain architecture, OBG-type G spans 160–328 (AEVGIIGLPN…LLQQVWEELD (169 aa)). Residues 166-173 (GLPNAGKS), 191-195 (FTTLI), 213-216 (DIPG), 280-283 (NKID), and 309-311 (SAV) each bind GTP. The Mg(2+) site is built by Ser173 and Thr193.

It belongs to the TRAFAC class OBG-HflX-like GTPase superfamily. OBG GTPase family. As to quaternary structure, monomer. The cofactor is Mg(2+).

Its subcellular location is the cytoplasm. Its function is as follows. An essential GTPase which binds GTP, GDP and possibly (p)ppGpp with moderate affinity, with high nucleotide exchange rates and a fairly low GTP hydrolysis rate. Plays a role in control of the cell cycle, stress response, ribosome biogenesis and in those bacteria that undergo differentiation, in morphogenesis control. The protein is GTPase Obg of Acaryochloris marina (strain MBIC 11017).